A 375-amino-acid polypeptide reads, in one-letter code: Alcohol dehydrogenase class-3 chain L (375 aa).

A1 is modified (N-acetylalanine). Zn(2+) is bound by residues C46, H68, C98, C101, C104, C112, and C175.

It belongs to the zinc-containing alcohol dehydrogenase family. Class-III subfamily. As to quaternary structure, homodimer or heterodimer with H chain. The cofactor is Zn(2+).

The protein resides in the cytoplasm. The catalysed reaction is a primary alcohol + NAD(+) = an aldehyde + NADH + H(+). It catalyses the reaction a secondary alcohol + NAD(+) = a ketone + NADH + H(+). The enzyme catalyses S-(hydroxymethyl)glutathione + NADP(+) = S-formylglutathione + NADPH + H(+). It carries out the reaction S-(hydroxymethyl)glutathione + NAD(+) = S-formylglutathione + NADH + H(+). Functionally, class-III ADH is remarkably ineffective in oxidizing ethanol, but it readily catalyzes the oxidation of long-chain primary alcohols and the oxidation of S-(hydroxymethyl) glutathione. In Gadus morhua (Atlantic cod), this protein is Alcohol dehydrogenase class-3 chain L.